The following is a 218-amino-acid chain: Probable glutamine ABC transporter permease protein GlnP (218 aa).

The next 3 membrane-spanning stretches (helical) occupy residues 19-39, 65-85, and 188-208; these read FLVTLYVAFISIILSFFFGLI, LPLLLIIFFTFFALPEIGIKL, and FFPIFLLAALMYFAVNYSLSL. Residues 19–210 form the ABC transmembrane type-1 domain; that stretch reads FLVTLYVAFI…AVNYSLSLAA (192 aa).

This sequence belongs to the binding-protein-dependent transport system permease family. The complex is composed of two ATP-binding proteins (GlnQ), two transmembrane proteins (GlnM and GlnP) and a solute-binding protein (GlnH).

It localises to the cell membrane. Functionally, part of the ABC transporter complex GlnHMPQ involved in glutamine transport. Probably responsible for the translocation of the substrate across the membrane. The protein is Probable glutamine ABC transporter permease protein GlnP (glnP) of Bacillus subtilis (strain 168).